The chain runs to 338 residues: Beta-ketoacyl-[acyl-carrier-protein] synthase III 2 (338 aa).

Active-site residues include Cys-119 and His-255. The segment at 256 to 260 (QANIR) is ACP-binding. Asn-285 is an active-site residue.

This sequence belongs to the thiolase-like superfamily. FabH family. As to quaternary structure, homodimer.

The protein localises to the cytoplasm. The enzyme catalyses malonyl-[ACP] + acetyl-CoA + H(+) = 3-oxobutanoyl-[ACP] + CO2 + CoA. It participates in lipid metabolism; fatty acid biosynthesis. Functionally, catalyzes the condensation reaction of fatty acid synthesis by the addition to an acyl acceptor of two carbons from malonyl-ACP. Catalyzes the first condensation reaction which initiates fatty acid synthesis and may therefore play a role in governing the total rate of fatty acid production. Possesses both acetoacetyl-ACP synthase and acetyl transacylase activities. Its substrate specificity determines the biosynthesis of branched-chain and/or straight-chain of fatty acids. The sequence is that of Beta-ketoacyl-[acyl-carrier-protein] synthase III 2 from Deinococcus radiodurans (strain ATCC 13939 / DSM 20539 / JCM 16871 / CCUG 27074 / LMG 4051 / NBRC 15346 / NCIMB 9279 / VKM B-1422 / R1).